Consider the following 593-residue polypeptide: Aspartate--tRNA(Asp/Asn) ligase (593 aa).

Glutamate 176 contacts L-aspartate. The tract at residues 200 to 203 (QIFK) is aspartate. Arginine 222 serves as a coordination point for L-aspartate. Residues 222 to 224 (RDE) and glutamine 231 each bind ATP. Histidine 450 is an L-aspartate binding site. Glutamate 490 serves as a coordination point for ATP. Arginine 497 provides a ligand contact to L-aspartate. 542-545 (GLDR) is an ATP binding site.

This sequence belongs to the class-II aminoacyl-tRNA synthetase family. Type 1 subfamily. As to quaternary structure, homodimer.

It localises to the cytoplasm. The enzyme catalyses tRNA(Asx) + L-aspartate + ATP = L-aspartyl-tRNA(Asx) + AMP + diphosphate. Functionally, aspartyl-tRNA synthetase with relaxed tRNA specificity since it is able to aspartylate not only its cognate tRNA(Asp) but also tRNA(Asn). Reaction proceeds in two steps: L-aspartate is first activated by ATP to form Asp-AMP and then transferred to the acceptor end of tRNA(Asp/Asn). The protein is Aspartate--tRNA(Asp/Asn) ligase of Symbiobacterium thermophilum (strain DSM 24528 / JCM 14929 / IAM 14863 / T).